We begin with the raw amino-acid sequence, 512 residues long: Sodium-dependent phosphate transport protein 1, chloroplastic (512 aa).

The transit peptide at 1–59 (MNARALLCSSNIHSLYTSNRPPEKTSSSRSLRNLKPSPKSLRVWIYPRNRSSVFRVLVR) directs the protein to the chloroplast. 11 helical membrane-spanning segments follow: residues 103-123 (WVIV…RVNM), 141-161 (VGLI…AGGI), 171-191 (VLGF…VAAK), 192-212 (LGLP…GVAM), 234-254 (LVYS…PFLI), 257-277 (FGWP…LTLW), 323-343 (VWAL…LLTW), 361-381 (LLSV…GWIA), 401-421 (IGFL…SPTM), 453-473 (GVLL…GTAA), and 486-506 (VFTI…LFST).

This sequence belongs to the major facilitator superfamily. Sodium/anion cotransporter (TC 2.A.1.14) family. Expressed in flower buds, sepals of mature flowers and mature leaves, less in senescent leaves and at low levels in roots.

It is found in the plastid. Its subcellular location is the chloroplast thylakoid membrane. In terms of biological role, specific for inorganic phosphate transport across the thylakoid membrane in a sodium dependent manner. Binds glutamate but cannot transport it. May act as an ascorbate transporter at the thylakoid membrane. The polypeptide is Sodium-dependent phosphate transport protein 1, chloroplastic (ANTR1) (Arabidopsis thaliana (Mouse-ear cress)).